The following is a 282-amino-acid chain: Acetylglutamate kinase (282 aa).

Substrate contacts are provided by residues 62–63 (GG), arginine 84, and asparagine 178.

This sequence belongs to the acetylglutamate kinase family. ArgB subfamily.

The protein localises to the cytoplasm. It carries out the reaction N-acetyl-L-glutamate + ATP = N-acetyl-L-glutamyl 5-phosphate + ADP. The protein operates within amino-acid biosynthesis; L-arginine biosynthesis; N(2)-acetyl-L-ornithine from L-glutamate: step 2/4. Catalyzes the ATP-dependent phosphorylation of N-acetyl-L-glutamate. The polypeptide is Acetylglutamate kinase (Thermotoga neapolitana (strain ATCC 49049 / DSM 4359 / NBRC 107923 / NS-E)).